Consider the following 89-residue polypeptide: Elongation factor 1-beta (89 aa).

It belongs to the EF-1-beta/EF-1-delta family.

Its function is as follows. Promotes the exchange of GDP for GTP in EF-1-alpha/GDP, thus allowing the regeneration of EF-1-alpha/GTP that could then be used to form the ternary complex EF-1-alpha/GTP/AAtRNA. This chain is Elongation factor 1-beta, found in Methanococcoides burtonii (strain DSM 6242 / NBRC 107633 / OCM 468 / ACE-M).